Reading from the N-terminus, the 426-residue chain is Glutamate-1-semialdehyde 2,1-aminomutase (426 aa).

An N6-(pyridoxal phosphate)lysine modification is found at Lys265.

This sequence belongs to the class-III pyridoxal-phosphate-dependent aminotransferase family. HemL subfamily. Homodimer. Pyridoxal 5'-phosphate is required as a cofactor.

The protein localises to the cytoplasm. It catalyses the reaction (S)-4-amino-5-oxopentanoate = 5-aminolevulinate. Its pathway is porphyrin-containing compound metabolism; protoporphyrin-IX biosynthesis; 5-aminolevulinate from L-glutamyl-tRNA(Glu): step 2/2. This Neisseria gonorrhoeae (strain ATCC 700825 / FA 1090) protein is Glutamate-1-semialdehyde 2,1-aminomutase.